Consider the following 196-residue polypeptide: Probable peptidyl-prolyl cis-trans isomerase (196 aa).

The N-terminal stretch at 1–26 (MSFIRSALAAAAFVALSIGAVQTASA) is a signal peptide. Positions 29–194 (PENTVILKLK…KIIKATIEAD (166 aa)) constitute a PPIase cyclophilin-type domain.

This sequence belongs to the cyclophilin-type PPIase family.

The protein localises to the periplasm. The catalysed reaction is [protein]-peptidylproline (omega=180) = [protein]-peptidylproline (omega=0). PPIases accelerate the folding of proteins. It catalyzes the cis-trans isomerization of proline imidic peptide bonds in oligopeptides. The protein is Probable peptidyl-prolyl cis-trans isomerase (ppi) of Brucella melitensis biotype 1 (strain ATCC 23456 / CCUG 17765 / NCTC 10094 / 16M).